A 258-amino-acid polypeptide reads, in one-letter code: Ribosomal RNA small subunit methyltransferase J (258 aa).

S-adenosyl-L-methionine is bound by residues 104 to 105 (RD), 120 to 121 (ER), and aspartate 175.

This sequence belongs to the methyltransferase superfamily. RsmJ family.

Its subcellular location is the cytoplasm. It catalyses the reaction guanosine(1516) in 16S rRNA + S-adenosyl-L-methionine = N(2)-methylguanosine(1516) in 16S rRNA + S-adenosyl-L-homocysteine + H(+). Specifically methylates the guanosine in position 1516 of 16S rRNA. In Chromobacterium violaceum (strain ATCC 12472 / DSM 30191 / JCM 1249 / CCUG 213 / NBRC 12614 / NCIMB 9131 / NCTC 9757 / MK), this protein is Ribosomal RNA small subunit methyltransferase J.